We begin with the raw amino-acid sequence, 128 residues long: Fluoride-specific ion channel FluC (128 aa).

4 helical membrane-spanning segments follow: residues 4 to 24 (LLLALIVGLGGFLGASLRYLI), 39 to 59 (GTLIANILGALLIGFIMEFSM), 71 to 91 (FLTTGIMGGLTTFSTFSYETI), and 99 to 119 (ITLGIENIILNLGCSLLFVVI). 2 residues coordinate Na(+): Gly-78 and Thr-81.

This sequence belongs to the fluoride channel Fluc/FEX (TC 1.A.43) family.

Its subcellular location is the cell membrane. It carries out the reaction fluoride(in) = fluoride(out). Na(+) is not transported, but it plays an essential structural role and its presence is essential for fluoride channel function. In terms of biological role, fluoride-specific ion channel. Important for reducing fluoride concentration in the cell, thus reducing its toxicity. In Clostridium perfringens (strain ATCC 13124 / DSM 756 / JCM 1290 / NCIMB 6125 / NCTC 8237 / Type A), this protein is Fluoride-specific ion channel FluC.